The primary structure comprises 879 residues: uncharacterized protein (879 aa).

Residues 14–34 form a helical membrane-spanning segment; it reads LAFFGCGVSVGAFFTLFLMGT.

Its subcellular location is the membrane. This is an uncharacterized protein from Mycoplasma pneumoniae (strain ATCC 29342 / M129 / Subtype 1) (Mycoplasmoides pneumoniae).